The primary structure comprises 659 residues: ATP-binding cassette sub-family D member 3 (659 aa).

Positions Met-1–Lys-61 are interaction with PEX19. Asn-12 is a glycosylation site (N-linked (GlcNAc...) asparagine). Lys-61 is subject to N6-acetyllysine. The chain crosses the membrane as a helical span at residues Gly-84–Ile-104. The ABC transmembrane type-1 domain occupies Tyr-85–Gly-372. Asn-106 is a glycosylation site (N-linked (GlcNAc...) asparagine). Residues Leu-126–Gly-146 form a helical membrane-spanning segment. Asn-206 is a glycosylation site (N-linked (GlcNAc...) asparagine). A helical membrane pass occupies residues Ala-224–Leu-244. Lys-260 is subject to N6-acetyllysine. The chain crosses the membrane as a helical span at residues Met-313 to Val-333. An N6-acetyllysine modification is found at Lys-399. At Ser-424 the chain carries Phosphoserine. An ABC transporter domain is found at Ile-434–Ser-659. An ATP-binding site is contributed by Gly-473 to Ser-480. N6-acetyllysine is present on Lys-533. Residue Ser-659 is modified to Phosphoserine.

The protein belongs to the ABC transporter superfamily. ABCD family. Peroxisomal fatty acyl CoA transporter (TC 3.A.1.203) subfamily. As to quaternary structure, homodimers. Can form heterodimers with ABCD1 and ABCD2. Dimerization is necessary to form an active transporter. Interacts with PEX19; mediates the targeting of ABCD3 to peroxisomes. Ubiquitinated by PEX2 during pexophagy in response to starvation, leading to its degradation.

It is found in the peroxisome membrane. The catalysed reaction is a very long-chain fatty acyl-CoA + H2O = a very long-chain fatty acid + CoA + H(+). The enzyme catalyses a very long-chain fatty acid(in) + ATP + H2O = a very long-chain fatty acid(out) + ADP + phosphate + H(+). It catalyses the reaction a long-chain fatty acyl-CoA + H2O = a long-chain fatty acid + CoA + H(+). It carries out the reaction a long-chain fatty acid(in) + ATP + H2O = a long-chain fatty acid(out) + ADP + phosphate + H(+). The catalysed reaction is pristanoyl-CoA + H2O = 2,6,10,14-tetramethylpentadecanoate + CoA + H(+). The enzyme catalyses 2,6,10,14-tetramethylpentadecanoate(in) + ATP + H2O = 2,6,10,14-tetramethylpentadecanoate(out) + ADP + phosphate + H(+). It catalyses the reaction hexadecanedioyl-CoA + H2O = hexadecanedioate + CoA + H(+). It carries out the reaction hexadecanedioate(in) + ATP + H2O = hexadecanedioate(out) + ADP + phosphate + H(+). The catalysed reaction is (5Z,8Z,11Z,14Z,17Z)-eicosapentaenoyl-CoA + H2O = (5Z,8Z,11Z,14Z,17Z)-eicosapentaenoate + CoA + H(+). The enzyme catalyses (5Z,8Z,11Z,14Z,17Z)-eicosapentaenoate(in) + ATP + H2O = (5Z,8Z,11Z,14Z,17Z)-eicosapentaenoate(out) + ADP + phosphate + H(+). It catalyses the reaction (4Z,7Z,10Z,13Z,16Z,19Z)-docosahexaenoyl-CoA + H2O = (4Z,7Z,10Z,13Z,16Z,19Z)-docosahexaenoate + CoA + H(+). It carries out the reaction (4Z,7Z,10Z,13Z,16Z,19Z)-docosahexaenoate(in) + ATP + H2O = (4Z,7Z,10Z,13Z,16Z,19Z)-docosahexaenoate(out) + ADP + phosphate + H(+). Its function is as follows. Broad substrate specificity ATP-dependent transporter of the ATP-binding cassette (ABC) family that catalyzes the transport of long-chain fatty acids (LCFA)-CoA, dicarboxylic acids-CoA, long-branched-chain fatty acids-CoA and bile acids from the cytosol to the peroxisome lumen for beta-oxydation. Has fatty acyl-CoA thioesterase and ATPase activities. Probably hydrolyzes fatty acyl-CoAs into free fatty acids prior to their ATP-dependent transport into peroxisomes. Thus, play a role in regulation of LCFAs and energy metabolism namely, in the degradation and biosynthesis of fatty acids by beta-oxidation. The chain is ATP-binding cassette sub-family D member 3 (Abcd3) from Mus musculus (Mouse).